Reading from the N-terminus, the 235-residue chain is STARD3 N-terminal-like protein (235 aa).

Methionine 1 bears the N-acetylmethionine mark. Residues 1–20 (MNHLPEHMENTLTGSQSSHA) are disordered. Topologically, residues 1–53 (MNHLPEHMENTLTGSQSSHASLRDIHSINPAQLMARIESYEGREKKGISDVRR) are cytoplasmic. Residues 10 to 20 (NTLTGSQSSHA) show a composition bias toward polar residues. 3 positions are modified to phosphoserine: serine 15, serine 21, and serine 27. In terms of domain architecture, MENTAL spans 48 to 218 (ISDVRRTFCL…YSPPESEAGS (171 aa)). The helical transmembrane segment at 54–74 (TFCLFVTFDLLFVTLLWIIEL) threads the bilayer. The Extracellular portion of the chain corresponds to 75–97 (NVNGGIENTLKKEVIHYDYYSSY). The helical transmembrane segment at 98-118 (FDIFLLAVFRFKVLILGYAVC) threads the bilayer. Residues 119 to 122 (RLRH) are Cytoplasmic-facing. Residues 123–143 (WWAIALTTAVTSAFLLAKVIL) form a helical membrane-spanning segment. At 144–150 (SKLFSQG) the chain is on the extracellular side. The chain crosses the membrane as a helical span at residues 151 to 171 (AFGYVLPIISFILAWIETWFL). Over 172–235 (DFKVLPQEAE…QESEKPLLEL (64 aa)) the chain is Cytoplasmic. The residue at position 193 (serine 193) is a Phosphoserine. A disordered region spans residues 202–235 (GLSDGQFYSPPESEAGSEEEAEEKQESEKPLLEL). The FFAT signature appears at 208-213 (FYSPPE). Basic and acidic residues predominate over residues 225–235 (KQESEKPLLEL).

This sequence belongs to the STARD3 family. As to quaternary structure, homodimer. Interacts (via the MENTAL domain) with STARD3NL. Interacts (via FFAT motif) with VAPA. Interacts (via FFAT motif) with VAPB. Interacts (via FFAT motif) with MOSPD2 (via MSP domain).

The protein resides in the late endosome membrane. Functionally, tethering protein that creates contact site between the endoplasmic reticulum and late endosomes: localizes to late endosome membranes and contacts the endoplasmic reticulum via interaction with VAPA and VAPB. This chain is STARD3 N-terminal-like protein, found in Mus musculus (Mouse).